The following is a 293-amino-acid chain: 4-hydroxy-3-methylbut-2-enyl diphosphate reductase (293 aa).

C12 contributes to the [4Fe-4S] cluster binding site. The (2E)-4-hydroxy-3-methylbut-2-enyl diphosphate site is built by H40 and H74. H40 and H74 together coordinate dimethylallyl diphosphate. Residues H40 and H74 each contribute to the isopentenyl diphosphate site. Position 96 (C96) interacts with [4Fe-4S] cluster. H128 is a (2E)-4-hydroxy-3-methylbut-2-enyl diphosphate binding site. A dimethylallyl diphosphate-binding site is contributed by H128. H128 is an isopentenyl diphosphate binding site. The active-site Proton donor is the E130. A (2E)-4-hydroxy-3-methylbut-2-enyl diphosphate-binding site is contributed by T166. C202 provides a ligand contact to [4Fe-4S] cluster. Positions 230, 231, 232, and 274 each coordinate (2E)-4-hydroxy-3-methylbut-2-enyl diphosphate. S230, S231, N232, and S274 together coordinate dimethylallyl diphosphate. Isopentenyl diphosphate is bound by residues S230, S231, N232, and S274.

Belongs to the IspH family. It depends on [4Fe-4S] cluster as a cofactor.

The enzyme catalyses isopentenyl diphosphate + 2 oxidized [2Fe-2S]-[ferredoxin] + H2O = (2E)-4-hydroxy-3-methylbut-2-enyl diphosphate + 2 reduced [2Fe-2S]-[ferredoxin] + 2 H(+). It carries out the reaction dimethylallyl diphosphate + 2 oxidized [2Fe-2S]-[ferredoxin] + H2O = (2E)-4-hydroxy-3-methylbut-2-enyl diphosphate + 2 reduced [2Fe-2S]-[ferredoxin] + 2 H(+). It functions in the pathway isoprenoid biosynthesis; dimethylallyl diphosphate biosynthesis; dimethylallyl diphosphate from (2E)-4-hydroxy-3-methylbutenyl diphosphate: step 1/1. Its pathway is isoprenoid biosynthesis; isopentenyl diphosphate biosynthesis via DXP pathway; isopentenyl diphosphate from 1-deoxy-D-xylulose 5-phosphate: step 6/6. Its function is as follows. Catalyzes the conversion of 1-hydroxy-2-methyl-2-(E)-butenyl 4-diphosphate (HMBPP) into a mixture of isopentenyl diphosphate (IPP) and dimethylallyl diphosphate (DMAPP). Acts in the terminal step of the DOXP/MEP pathway for isoprenoid precursor biosynthesis. This Cytophaga hutchinsonii (strain ATCC 33406 / DSM 1761 / CIP 103989 / NBRC 15051 / NCIMB 9469 / D465) protein is 4-hydroxy-3-methylbut-2-enyl diphosphate reductase.